An 87-amino-acid chain; its full sequence is MQIVQGFPADAPLCALMWTCSFLLPGLQTETPYPCTSLCLSSSQSAHPPLPVRVFSAESGYGIPFCAEPCSRVTVCHLQAVPVCMPV.

In terms of tissue distribution, expressed in placenta and testis.

In Homo sapiens (Human), this protein is Down syndrome critical region protein 10 (DSCR10).